We begin with the raw amino-acid sequence, 681 residues long: Auxin response factor 8 (681 aa).

The segment at residues 120 to 222 is a DNA-binding region (TF-B3); sequence FAKTLTQSDA…DLHVGIRRAK (103 aa). Disordered stretches follow at residues 474 to 518 and 534 to 577; these read LRRP…AKPP and SLSG…TSSE. Polar residues-rich tracts occupy residues 534-555 and 564-577; these read SLSGTTSPAATGNSSLNWNTEK and GVIQNSPTDNTSSE. Positions 595–675 constitute a PB1 domain; sequence PGQCKVFIES…RRLTILTDAG (81 aa).

It belongs to the ARF family. Homodimers and heterodimers. Expressed in roots, culms, leaves and young panicles.

It localises to the nucleus. In terms of biological role, auxin response factors (ARFs) are transcriptional factors that bind specifically to the DNA sequence 5'-TGTCTC-3' found in the auxin-responsive promoter elements (AuxREs). The protein is Auxin response factor 8 (ARF8) of Oryza sativa subsp. japonica (Rice).